A 347-amino-acid chain; its full sequence is Dihydroorotase (347 aa).

Zn(2+) contacts are provided by H14 and H16. Substrate is bound by residues 16–18 and N42; that span reads HLR. Residues K100, H137, and H175 each coordinate Zn(2+). N6-carboxylysine is present on K100. Position 137 (H137) interacts with substrate. Position 220 (L220) interacts with substrate. D248 lines the Zn(2+) pocket. D248 is an active-site residue. The substrate site is built by H252 and A264.

Belongs to the metallo-dependent hydrolases superfamily. DHOase family. Class II DHOase subfamily. As to quaternary structure, homodimer. Zn(2+) serves as cofactor.

It carries out the reaction (S)-dihydroorotate + H2O = N-carbamoyl-L-aspartate + H(+). It functions in the pathway pyrimidine metabolism; UMP biosynthesis via de novo pathway; (S)-dihydroorotate from bicarbonate: step 3/3. Catalyzes the reversible cyclization of carbamoyl aspartate to dihydroorotate. The chain is Dihydroorotase from Stutzerimonas stutzeri (strain A1501) (Pseudomonas stutzeri).